A 124-amino-acid polypeptide reads, in one-letter code: Sulfur globule protein CV2 (124 aa).

The N-terminal stretch at 1–22 (MKKLATAAAVAALLGASASASA) is a signal peptide.

In terms of assembly, the protein envelope of the sulfur globules is composed of the three different proteins CV1, CV2 and CV3.

In terms of biological role, structural protein of the sulfur globules, which are intracellular globules that serve for sulfur storage in purple sulfur bacteria. The polypeptide is Sulfur globule protein CV2 (sgpB) (Allochromatium vinosum (strain ATCC 17899 / DSM 180 / NBRC 103801 / NCIMB 10441 / D) (Chromatium vinosum)).